The primary structure comprises 367 residues: UDP-N-acetylglucosamine--N-acetylmuramyl-(pentapeptide) pyrophosphoryl-undecaprenol N-acetylglucosamine transferase (367 aa).

Residues 10–12 (TGG), asparagine 124, serine 196, and glutamine 300 each bind UDP-N-acetyl-alpha-D-glucosamine.

It belongs to the glycosyltransferase 28 family. MurG subfamily.

Its subcellular location is the cell membrane. The enzyme catalyses di-trans,octa-cis-undecaprenyl diphospho-N-acetyl-alpha-D-muramoyl-L-alanyl-D-glutamyl-meso-2,6-diaminopimeloyl-D-alanyl-D-alanine + UDP-N-acetyl-alpha-D-glucosamine = di-trans,octa-cis-undecaprenyl diphospho-[N-acetyl-alpha-D-glucosaminyl-(1-&gt;4)]-N-acetyl-alpha-D-muramoyl-L-alanyl-D-glutamyl-meso-2,6-diaminopimeloyl-D-alanyl-D-alanine + UDP + H(+). It functions in the pathway cell wall biogenesis; peptidoglycan biosynthesis. In terms of biological role, cell wall formation. Catalyzes the transfer of a GlcNAc subunit on undecaprenyl-pyrophosphoryl-MurNAc-pentapeptide (lipid intermediate I) to form undecaprenyl-pyrophosphoryl-MurNAc-(pentapeptide)GlcNAc (lipid intermediate II). The sequence is that of UDP-N-acetylglucosamine--N-acetylmuramyl-(pentapeptide) pyrophosphoryl-undecaprenol N-acetylglucosamine transferase from Natranaerobius thermophilus (strain ATCC BAA-1301 / DSM 18059 / JW/NM-WN-LF).